The primary structure comprises 638 residues: NBPF family member NBPF4 (638 aa).

2 coiled-coil regions span residues 10–43 (SERAEMNILEINQELRSQLAESNQQFRDLKEKFL) and 69–115 (DSVL…KLRE). Residues 157 to 285 (HLVHKLSPEN…VPPRHHDKSN (129 aa)) are disordered. Residues 165-179 (ENDEDEDEDEDDKDE) show a composition bias toward acidic residues. The Olduvai 1 domain occupies 174-261 (EDDKDEEVEK…EEEEALNIPP (88 aa)). Residues 192-202 (EVQKTEEKEVP) are compositionally biased toward basic and acidic residues. Residues 214 to 226 (SNSHNPSNSNQPH) are compositionally biased toward low complexity. Basic and acidic residues-rich tracts occupy residues 232 to 251 (TFKEHEVDSALVVESEHPHD) and 264 to 273 (QNDHEEEEGK). 2 Olduvai domains span residues 326 to 399 (EKQS…ALVD) and 400 to 503 (KIKK…SQAQ). The interval 562–584 (GMKNPPQLEDDALEGSASNTQGR) is disordered.

Belongs to the NBPF family. Expressed in testis.

The protein localises to the cytoplasm. This Homo sapiens (Human) protein is NBPF family member NBPF4.